Here is a 153-residue protein sequence, read N- to C-terminus: Partner of bursicon (153 aa).

Residues 1–35 form the signal peptide; that stretch reads MCNSVRTALAASNCCSIVLCCVLLLTLTLTVAVTA. Cystine bridges form between Cys-44/Cys-102, Cys-68/Cys-117, Cys-77/Cys-143, Cys-81/Cys-145, and Cys-99/Cys-148. Residues 44 to 139 enclose the CTCK domain; it reads CETLPSEIHL…SATMEIRLKE (96 aa).

In terms of assembly, heterodimer of burs and pburs.

The protein localises to the secreted. Functionally, final heterodimeric neurohormone released at the end of the molting cycle, involved in the sclerotization (tanning) of the insect cuticle, melanization and wing spreading. This is Partner of bursicon from Anopheles gambiae (African malaria mosquito).